The following is a 321-amino-acid chain: Fibronectin type III domain-containing protein 8 (321 aa).

One can recognise a Fibronectin type-III domain in the interval 175-277; the sequence is VPEAPFVCEH…KPYKFATVAT (103 aa).

In Bos taurus (Bovine), this protein is Fibronectin type III domain-containing protein 8 (FNDC8).